Here is an 81-residue protein sequence, read N- to C-terminus: Cytotoxin 3b (81 aa).

The signal sequence occupies residues 1 to 21; sequence MKTLLLTLVVVTIVCLDLGYT. Cystine bridges form between cysteine 24-cysteine 42, cysteine 35-cysteine 59, cysteine 63-cysteine 74, and cysteine 75-cysteine 80.

This sequence belongs to the three-finger toxin family. Short-chain subfamily. Type IA cytotoxin sub-subfamily. As to quaternary structure, monomer in solution; Homodimer and oligomer in the presence of negatively charged lipids forming a pore with a size ranging between 20 and 30 Angstroms. Expressed by the venom gland.

Its subcellular location is the secreted. The protein localises to the target cell membrane. Its function is as follows. Shows cytolytic activity on many different cells by forming pore in lipid membranes. In vivo, increases heart rate or kills the animal by cardiac arrest. In addition, it binds to heparin with high affinity, interacts with Kv channel-interacting protein 1 (KCNIP1) in a calcium-independent manner, and binds to integrin alpha-V/beta-3 (ITGAV/ITGB3) with moderate affinity. The polypeptide is Cytotoxin 3b (Naja atra (Chinese cobra)).